The sequence spans 377 residues: Leukocyte elastase inhibitor (377 aa).

Position 1 is an N-acetylmethionine (M1). An N6-acetyllysine modification is found at K136. At S298 the chain carries Phosphoserine. Residues 349–377 (EFVADHPFIFFIRHKPSSNILFLGRLSSP) form a CARD-binding motif (CBM) region.

It belongs to the serpin family. Ov-serpin subfamily. As to quaternary structure, monomer. Interacts (via C-terminus) with CASP1; CASP4 (via CARD domain) and CASP5; these interactions regulate the activity of inflammatory caspases. Interacts with PRTN3. Interacts with GZMH.

It localises to the secreted. The protein localises to the cytoplasm. It is found in the cytolytic granule. Its subcellular location is the early endosome. Neutrophil serine protease inhibitor that plays an essential role in the regulation of the innate immune response, inflammation and cellular homeostasis. Acts primarily to protect the cell from proteases released in the cytoplasm during stress or infection. These proteases are important in killing microbes but when released from granules, these potent enzymes also destroy host proteins and contribute to mortality. Regulates the activity of the neutrophil proteases elastase, cathepsin G, proteinase-3, chymase, chymotrypsin, and kallikrein-3. Also acts as a potent intracellular inhibitor of GZMH by directly blocking its proteolytic activity. During inflammation, limits the activity of inflammatory caspases CASP1, CASP4 and CASP5 by suppressing their caspase-recruitment domain (CARD) oligomerization and enzymatic activation. When secreted, promotes the proliferation of beta-cells via its protease inhibitory function. This chain is Leukocyte elastase inhibitor (SERPINB1), found in Bos taurus (Bovine).